We begin with the raw amino-acid sequence, 581 residues long: Meiotic PUF family protein 1 (581 aa).

In terms of domain architecture, PUM-HD spans 225–580 (FPNGTTEPFE…RIAALVEKSK (356 aa)). Pumilio repeat units follow at residues 291–326 (TILP…SFSY), 327–362 (FLKK…NLIE), 363–398 (ELIE…GIFD), 403–438 (KMQG…TCLD), 439–474 (EIIN…RILN), 475–510 (SLLK…RYVK), 518–554 (ELPT…LMAE), and 555–581 (HLKK…KSKS).

RNA-binding protein essential for meiotic progression. The sequence is that of Meiotic PUF family protein 1 (mpf1) from Schizosaccharomyces pombe (strain 972 / ATCC 24843) (Fission yeast).